We begin with the raw amino-acid sequence, 460 residues long: WD repeat-containing protein 41 (460 aa).

6 WD repeats span residues 40–79, 82–128, 131–168, 220–258, 321–359, and 403–441; these read EAHRDIVRFLVRLDDFRFASAGDDGIIVVWNAQTGEKLLE, GHTQ…QIQR, CFQSTVKCLTVLQRLDIWLSGGSDLGVWNRKLDLLCKT, DHQDNILSLANINDTGFVTGSHVGELLIWDALDWTVQAC, AHDSNILHIDKLPNRQLISCSEDGAVRMWEVREKQQLAA, and GHSSSVEMFLYFEDHGLVTCSADHLIILWKNGERESGVR.

In terms of assembly, component of the C9orf72-SMCR8 complex, at least composed of C9orf72, SMCR8 and WDR41. The complex is formed of two protomers, each individually consisting of one molecule each of C9orf72, SMCR8 and WDR41. The protomers homodimerize via an interaction between C9orf72 (via C-terminus) and SMCR8 (via N-terminus). Within each protomer SMCR8 (via DENN domain) acts as a bridging protein between WDR41 (via C-terminus and N-terminus) and C9orf72 (via C-terminus). The C9orf72-SMCR8 complex associates with the ULK1/ATG1 kinase complex.

It is found in the cytoplasm. Non-catalytic component of the C9orf72-SMCR8 complex, a complex that has guanine nucleotide exchange factor (GEF) activity and regulates autophagy. The C9orf72-SMCR8 complex promotes the exchange of GDP to GTP, converting inactive GDP-bound RAB8A and RAB39B into their active GTP-bound form, thereby promoting autophagosome maturation. As part of the C9orf72-SMCR8 complex, stimulates RAB8A and RAB11A GTPase activity in vitro, however WDR42 is shown not be an essential complex component for this function. The C9orf72-SMCR8 complex also acts as a negative regulator of autophagy initiation by interacting with the ULK1/ATG1 kinase complex and inhibiting its protein kinase activity. This chain is WD repeat-containing protein 41, found in Mus musculus (Mouse).